The primary structure comprises 419 residues: GTPase Obg (419 aa).

An Obg domain is found at 1-156 (MRFVDYVSIE…FYLDLQLKVM (156 aa)). An OBG-type G domain is found at 157-334 (ADIGLVGKPN…LGENQKKLEI (178 aa)). GTP is bound by residues 163–170 (GKPNAGKS), 188–192 (FTTLV), 209–212 (DLPG), 278–281 (NKCD), and 315–317 (NII). Mg(2+)-binding residues include Ser-170 and Thr-190. The region spanning 342–419 (IEFNLKAPFL…RIYEFEFHWN (78 aa)) is the OCT domain.

Belongs to the TRAFAC class OBG-HflX-like GTPase superfamily. OBG GTPase family. In terms of assembly, monomer. Mg(2+) is required as a cofactor.

The protein resides in the cytoplasm. An essential GTPase which binds GTP, GDP and possibly (p)ppGpp with moderate affinity, with high nucleotide exchange rates and a fairly low GTP hydrolysis rate. Plays a role in control of the cell cycle, stress response, ribosome biogenesis and in those bacteria that undergo differentiation, in morphogenesis control. The sequence is that of GTPase Obg from Mesomycoplasma hyopneumoniae (strain 7448) (Mycoplasma hyopneumoniae).